We begin with the raw amino-acid sequence, 352 residues long: Secreted RxLR effector protein 122 (352 aa).

A signal peptide spans 1–21 (MRGAYYVLIALLVVASSQTSA). The RxLR-dEER signature appears at 48 to 65 (QFLRGSRNVPGDLAHEER). Low complexity predominate over residues 280-290 (RGGTTGASRGT). The segment at 280-352 (RGGTTGASRG…VEPEGHRSKP (73 aa)) is disordered. Residues 302 to 315 (AASTSKGKSSVFTE) show a composition bias toward polar residues.

This sequence belongs to the RxLR effector family.

The protein resides in the secreted. The protein localises to the host nucleus. Functionally, secreted effector that acts as an elicitor that induces cell death in host plant cells. In Plasmopara viticola (Downy mildew of grapevine), this protein is Secreted RxLR effector protein 122.